Reading from the N-terminus, the 427-residue chain is GTPase Obg (427 aa).

The 158-residue stretch at 1–158 folds into the Obg domain; the sequence is MFVDKVKVYV…RDVILELKVL (158 aa). Residues 118–144 are disordered; the sequence is KGGRGGRGNTRFATPANPAPELSENGE. The 171-residue stretch at 159 to 329 folds into the OBG-type G domain; that stretch reads ADAGLVGFPS…LLRAIMDTIE (171 aa). Residues 165–172, 190–194, 212–215, 282–285, and 310–312 each bind GTP; these read GFPSVGKS, FTTIT, DLPG, NKMD, and SAL. Mg(2+) contacts are provided by S172 and T192. Residues 349-427 form the OCT domain; it reads KHDKEQDPFV…LLEFEFEFIE (79 aa).

The protein belongs to the TRAFAC class OBG-HflX-like GTPase superfamily. OBG GTPase family. As to quaternary structure, monomer. Mg(2+) serves as cofactor.

It localises to the cytoplasm. Its function is as follows. An essential GTPase which binds GTP, GDP and possibly (p)ppGpp with moderate affinity, with high nucleotide exchange rates and a fairly low GTP hydrolysis rate. Plays a role in control of the cell cycle, stress response, ribosome biogenesis and in those bacteria that undergo differentiation, in morphogenesis control. This Halalkalibacterium halodurans (strain ATCC BAA-125 / DSM 18197 / FERM 7344 / JCM 9153 / C-125) (Bacillus halodurans) protein is GTPase Obg.